The primary structure comprises 397 residues: N(6)-adenosine-methyltransferase non-catalytic subunit METTL14 (397 aa).

2 disordered regions span residues 37-67 (NAED…KKTP) and 368-397 (ELLR…GRPR). Positions 40 to 51 (DINSSRQLNSGG) are enriched in polar residues. Residues 382 to 397 (LRGRGRGFPRGRGRPR) show a composition bias toward basic residues.

Belongs to the MT-A70-like family. Component of the WMM complex, a N6-methyltransferase complex composed of a catalytic subcomplex, named MAC, and of an associated subcomplex, named MACOM. The MAC subcomplex is composed of Ime4/Mettl3 and Mettl14. The MACOM subcomplex is composed of fl(2)d, Flacc/Xio, Hakai, vir, and, in some cases of nito.

It is found in the nucleus. In terms of biological role, non-catalytic component of the WMM complex, a complex that mediates N6-methyladenosine (m6A) methylation of mRNAs, a modification that plays a role in the efficiency of mRNA splicing and is required for sex determination. In the heterodimer formed with Ime4/Mettl3, Mettl14 constitutes the RNA-binding scaffold that recognizes the substrate rather than the catalytic core. Required for sex determination and dosage compensation via Sxl alternative splicing: m6A methylation acts as a key regulator of Sxl pre-mRNA and promotes female-specific alternative splicing of Sxl, which determines female physiognomy. M6A methylation is also required for neuronal functions. This Drosophila melanogaster (Fruit fly) protein is N(6)-adenosine-methyltransferase non-catalytic subunit METTL14.